Reading from the N-terminus, the 102-residue chain is Co-chaperonin GroES (102 aa).

This sequence belongs to the GroES chaperonin family. Heptamer of 7 subunits arranged in a ring. Interacts with the chaperonin GroEL.

The protein resides in the cytoplasm. Its function is as follows. Together with the chaperonin GroEL, plays an essential role in assisting protein folding. The GroEL-GroES system forms a nano-cage that allows encapsulation of the non-native substrate proteins and provides a physical environment optimized to promote and accelerate protein folding. GroES binds to the apical surface of the GroEL ring, thereby capping the opening of the GroEL channel. The sequence is that of Co-chaperonin GroES from Streptomyces griseus subsp. griseus (strain JCM 4626 / CBS 651.72 / NBRC 13350 / KCC S-0626 / ISP 5235).